Reading from the N-terminus, the 78-residue chain is Small ribosomal subunit protein bS20 (78 aa).

The protein belongs to the bacterial ribosomal protein bS20 family.

Functionally, binds directly to 16S ribosomal RNA. This Streptococcus pneumoniae serotype 19F (strain G54) protein is Small ribosomal subunit protein bS20.